The primary structure comprises 243 residues: Tyrosine-protein phosphatase CpsB (243 aa).

This sequence belongs to the metallo-dependent hydrolases superfamily. CpsB/CapC family. The cofactor is Mn(2+).

It carries out the reaction O-phospho-L-tyrosyl-[protein] + H2O = L-tyrosyl-[protein] + phosphate. Its pathway is capsule biogenesis; capsule polysaccharide biosynthesis. Functionally, dephosphorylates CpsD. Involved in the regulation of capsular polysaccharide biosynthesis. In Streptococcus pneumoniae serotype 4 (strain ATCC BAA-334 / TIGR4), this protein is Tyrosine-protein phosphatase CpsB (cpsB).